Consider the following 343-residue polypeptide: S-adenosylmethionine:tRNA ribosyltransferase-isomerase (343 aa).

The protein belongs to the QueA family. As to quaternary structure, monomer.

It localises to the cytoplasm. The catalysed reaction is 7-aminomethyl-7-carbaguanosine(34) in tRNA + S-adenosyl-L-methionine = epoxyqueuosine(34) in tRNA + adenine + L-methionine + 2 H(+). It participates in tRNA modification; tRNA-queuosine biosynthesis. Functionally, transfers and isomerizes the ribose moiety from AdoMet to the 7-aminomethyl group of 7-deazaguanine (preQ1-tRNA) to give epoxyqueuosine (oQ-tRNA). In Latilactobacillus sakei subsp. sakei (strain 23K) (Lactobacillus sakei subsp. sakei), this protein is S-adenosylmethionine:tRNA ribosyltransferase-isomerase.